Consider the following 900-residue polypeptide: Zinc finger protein 574 (900 aa).

C2H2-type zinc fingers lie at residues 16 to 38, 76 to 98, and 126 to 148; these read YVCSECNQLYGSLEEVLVHQNSH, YQCLECGQLLLSPSQLLEHQELH, and YECVDCKALFASQEMWLSHRQTH. S164 is subject to Phosphoserine. The C2H2-type 4 zinc-finger motif lies at 213–235; sequence YKCSECSQLFQMPADFLEHQATH. The segment covering 244-254 has biased composition (low complexity); sequence AEPATQQETQV. Residues 244–306 are disordered; that stretch reads AEPATQQETQ…RRNNSGESGG (63 aa). A compositionally biased stretch (basic and acidic residues) spans 273–290; that stretch reads HSYELRNELRNGEAIGRD. A Phosphoserine modification is found at S301. 10 C2H2-type zinc fingers span residues 312–334, 339–361, 367–389, 395–416, 469–492, 498–520, 526–548, 554–576, 582–604, and 610–633; these read LFCSACDQLFLSPHQLQQHLRSH, FKCPLCSRVFPSPSSLDQHLGDH, FLCVDCGLAFGTEALLLAHRRAH, HSCPCGKTFVNLTKFLYHRRTH, YRCLLCSREFGKALQLTRHQRFVH, HKCSICGKMFKKKSHVRNHLRTH, FPCPDCSKPFNSPANLARHRLTH, YRCGDCGKAFTQSSTLRQHRLVH, YRCQECGVRFHRPYRLLMHRYHH, and YKCRECPRSFLLRRLLEVHQLVIH. The C2H2-type 15; degenerate zinc-finger motif lies at 639–662; the sequence is YRCSSCGAAFPSSLRLREHRCAAA. The segment at 670–692 adopts a C2H2-type 16 zinc-finger fold; the sequence is FECGTCGKKVGSAARLQAHEAAH. The disordered stretch occupies residues 690 to 741; it reads AAHAAAGPGEVLAKEPPAPRASRATRTPVAPSPTALSGTTSAAPAAPARRRG. S721 carries the phosphoserine modification. Low complexity predominate over residues 721–736; the sequence is SPTALSGTTSAAPAAP. T728 bears the Phosphothreonine mark. 4 consecutive C2H2-type zinc fingers follow at residues 742-764, 770-792, 798-820, and 826-848; these read PECSECKKLFSTETSLQVHRRIH, YPCPDCGKAFRQSTHLKDHRRLH, FACEVCGKAFAISMRLAEHRRIH, and YSCPDCGKSYRSFSNLWKHRKTH. R836 carries the asymmetric dimethylarginine modification.

The protein belongs to the krueppel C2H2-type zinc-finger protein family.

The protein resides in the nucleus. In terms of biological role, may be involved in transcriptional regulation. The sequence is that of Zinc finger protein 574 (Znf574) from Mus musculus (Mouse).